Consider the following 71-residue polypeptide: Biotinylated protein TB7.3 homolog (71 aa).

Positions 2-71 (AEDVRAEIVA…QAGHLIAVID (70 aa)) constitute a Biotinyl-binding domain. At Lys-37 the chain carries N6-biotinyllysine.

The sequence is that of Biotinylated protein TB7.3 homolog from Mycolicibacterium smegmatis (strain ATCC 700084 / mc(2)155) (Mycobacterium smegmatis).